The chain runs to 259 residues: AHAWGYGPTDGPDKWVSNFPIADGPRQSPIDILPGGASYDSGLKPLSLKYDPSNCLEILNNGHSFQVTFADDSDSSTLKEGPISGVYRLKQFHFHWGASNDKGSEHTVAGTKYPAELHLVHWNTKYPSFGEAASKPDGLAVVGVFLKIGDANASLQKVLDAFNDIRAKGKQTSFADFDPSTLLPGCLDYWTYDGSLTTPPLLESVTWIVCKEPISVSCEQMAKFRSLLFSAEGEPECCMVDNYRPPQPLKGRHVRASFQ.

Ala-1 carries the post-translational modification N-acetylalanine. Residues 2-258 (HAWGYGPTDG…LKGRHVRASF (257 aa)) enclose the Alpha-carbonic anhydrase domain. Residue His-63 is the Proton donor/acceptor of the active site. Zn(2+) is bound by residues His-93, His-95, and His-118. Substrate-binding positions include Thr-197 and 197–198 (TT).

It belongs to the alpha-carbonic anhydrase family. Zn(2+) is required as a cofactor.

It is found in the cytoplasm. The enzyme catalyses hydrogencarbonate + H(+) = CO2 + H2O. Its function is as follows. Catalyzes the reversible hydration of carbon dioxide. This chain is Carbonic anhydrase 1 (ca1), found in Chionodraco hamatus (Antarctic teleost icefish).